The primary structure comprises 1404 residues: G8 domain-containing protein DDB_G0286897 (1404 aa).

The first 20 residues, 1 to 20 (MNYFKYFIFVVFLFFTIVKC), serve as a signal peptide directing secretion. The next 2 helical transmembrane spans lie at 97-117 (LVGFNWISMLIASLLSIGLFA) and 128-148 (IIILIIGFICLSLMINGIQSI). Residues Asn-352, Asn-365, Asn-413, Asn-481, Asn-639, Asn-838, Asn-979, Asn-1003, Asn-1017, Asn-1253, and Asn-1334 are each glycosylated (N-linked (GlcNAc...) asparagine). A G8 domain is found at 553–679 (STWASGFVPL…YHNTWTKLST (127 aa)).

Belongs to the comF family.

It localises to the membrane. In Dictyostelium discoideum (Social amoeba), this protein is G8 domain-containing protein DDB_G0286897.